A 66-amino-acid polypeptide reads, in one-letter code: Toxin Boma6e (66 aa).

Positions 2–64 (RDAYIAQNYN…VPLKVQGKCH (63 aa)) constitute an LCN-type CS-alpha/beta domain. 3 cysteine pairs are disulfide-bonded: Cys12-Cys63, Cys22-Cys46, and Cys26-Cys48.

Belongs to the long (3 C-C) scorpion toxin superfamily. Post-translationally, only three disulfide bridges can be formed, because only seven cysteines are present. Expressed by the venom gland.

It is found in the secreted. Its function is as follows. Binds voltage-independently at site-3 of sodium channels (Nav) and inhibits the inactivation of the activated channels, thereby blocking neuronal transmission. This Buthus occitanus mardochei (Moroccan scorpion) protein is Toxin Boma6e.